Consider the following 388-residue polypeptide: GTPase Obg (388 aa).

One can recognise an Obg domain in the interval Ser4–Leu162. Residues Lys18–Gly45 are disordered. The span at Gly36–Gly45 shows a compositional bias: gly residues. One can recognise an OBG-type G domain in the interval Ala163–Asn329. Residues Gly169–Ser176, Phe194–Glu198, Asp216–Gly219, Thr283–Asp286, and Ser310–Val312 each bind GTP. Residues Ser176 and Thr196 each coordinate Mg(2+). The interval Leu352 to Lys388 is disordered. The segment covering Gly356–Lys388 has biased composition (acidic residues).

Belongs to the TRAFAC class OBG-HflX-like GTPase superfamily. OBG GTPase family. Monomer. It depends on Mg(2+) as a cofactor.

The protein localises to the cytoplasm. In terms of biological role, an essential GTPase which binds GTP, GDP and possibly (p)ppGpp with moderate affinity, with high nucleotide exchange rates and a fairly low GTP hydrolysis rate. Plays a role in control of the cell cycle, stress response, ribosome biogenesis and in those bacteria that undergo differentiation, in morphogenesis control. The protein is GTPase Obg of Bacteroides fragilis (strain ATCC 25285 / DSM 2151 / CCUG 4856 / JCM 11019 / LMG 10263 / NCTC 9343 / Onslow / VPI 2553 / EN-2).